The sequence spans 198 residues: Glutamyl-tRNA(Gln) amidotransferase subunit C, mitochondrial (198 aa).

The protein belongs to the GatC family. As to quaternary structure, subunit of the heterotrimeric GatCAB amidotransferase (AdT) complex, composed of A, B and C subunits.

It is found in the mitochondrion. It catalyses the reaction L-glutamyl-tRNA(Gln) + L-glutamine + ATP + H2O = L-glutaminyl-tRNA(Gln) + L-glutamate + ADP + phosphate + H(+). In terms of biological role, allows the formation of correctly charged Gln-tRNA(Gln) through the transamidation of misacylated Glu-tRNA(Gln) in the mitochondria. The reaction takes place in the presence of glutamine and ATP through an activated gamma-phospho-Glu-tRNA(Gln). The polypeptide is Glutamyl-tRNA(Gln) amidotransferase subunit C, mitochondrial (Caenorhabditis remanei (Caenorhabditis vulgaris)).